We begin with the raw amino-acid sequence, 367 residues long: 3-dehydroquinate synthase (367 aa).

NAD(+) is bound by residues 112 to 116 (GVIGD), 136 to 137 (TT), K149, K158, and 176 to 179 (TLKT). Zn(2+) contacts are provided by E191, H256, and H273.

It belongs to the sugar phosphate cyclases superfamily. Dehydroquinate synthase family. NAD(+) is required as a cofactor. It depends on Co(2+) as a cofactor. Zn(2+) serves as cofactor.

It is found in the cytoplasm. It catalyses the reaction 7-phospho-2-dehydro-3-deoxy-D-arabino-heptonate = 3-dehydroquinate + phosphate. The protein operates within metabolic intermediate biosynthesis; chorismate biosynthesis; chorismate from D-erythrose 4-phosphate and phosphoenolpyruvate: step 2/7. Its function is as follows. Catalyzes the conversion of 3-deoxy-D-arabino-heptulosonate 7-phosphate (DAHP) to dehydroquinate (DHQ). In Prochlorococcus marinus (strain SARG / CCMP1375 / SS120), this protein is 3-dehydroquinate synthase.